Here is a 239-residue protein sequence, read N- to C-terminus: ATP synthase subunit b (239 aa).

Low complexity predominate over residues 1–22; the sequence is MYAQEAQQKPEAQQSAPAAEQP. The disordered stretch occupies residues 1 to 64; it reads MYAQEAQQKP…GEEEAGEHME (64 aa). Basic and acidic residues-rich tracts occupy residues 23-33 and 45-64; these read KPAEEQAKPEQ and ELSEASHAAEGEEEAGEHME. The helical transmembrane segment at 85 to 105 threads the bilayer; it reads SYWIAMAFNFAIVFALLGWAM.

This sequence belongs to the ATPase B chain family. F-type ATPases have 2 components, F(1) - the catalytic core - and F(0) - the membrane proton channel. F(1) has five subunits: alpha(3), beta(3), gamma(1), delta(1), epsilon(1). F(0) has three main subunits: a(1), b(2) and c(10-14). The alpha and beta chains form an alternating ring which encloses part of the gamma chain. F(1) is attached to F(0) by a central stalk formed by the gamma and epsilon chains, while a peripheral stalk is formed by the delta and b chains.

The protein resides in the cell inner membrane. Its function is as follows. F(1)F(0) ATP synthase produces ATP from ADP in the presence of a proton or sodium gradient. F-type ATPases consist of two structural domains, F(1) containing the extramembraneous catalytic core and F(0) containing the membrane proton channel, linked together by a central stalk and a peripheral stalk. During catalysis, ATP synthesis in the catalytic domain of F(1) is coupled via a rotary mechanism of the central stalk subunits to proton translocation. Component of the F(0) channel, it forms part of the peripheral stalk, linking F(1) to F(0). The sequence is that of ATP synthase subunit b from Koribacter versatilis (strain Ellin345).